Reading from the N-terminus, the 834-residue chain is Periplasmic nitrate reductase (834 aa).

The tat-type signal signal peptide spans 1–29; that stretch reads MKLSRREFAKANAAAIAAAAAGLPLASTA. Residues 41 to 97 form the 4Fe-4S Mo/W bis-MGD-type domain; it reads LDWNKAPCRFCGTGCSVMVATRDNRVVATHGDVKAEVNRGLNCVKGYFLSKIMYGVD. The [4Fe-4S] cluster site is built by Cys48, Cys51, Cys55, and Cys83. Mo-bis(molybdopterin guanine dinucleotide) is bound by residues Lys85, Gln152, Asn177, Cys181, 214 to 221, 245 to 249, 264 to 266, Met375, Gln379, Asn485, 511 to 512, Lys534, Asp561, and 721 to 730; these read WGSNMAEM, STFEH, QTD, SD, and TGRVLEHWHT. Phe797 contacts substrate. 2 residues coordinate Mo-bis(molybdopterin guanine dinucleotide): Asn805 and Lys822.

The protein belongs to the prokaryotic molybdopterin-containing oxidoreductase family. NasA/NapA/NarB subfamily. In terms of assembly, component of the periplasmic nitrate reductase NapAB complex composed of NapA and NapB. Requires [4Fe-4S] cluster as cofactor. Mo-bis(molybdopterin guanine dinucleotide) serves as cofactor. Predicted to be exported by the Tat system. The position of the signal peptide cleavage has not been experimentally proven.

The protein resides in the periplasm. The enzyme catalyses 2 Fe(II)-[cytochrome] + nitrate + 2 H(+) = 2 Fe(III)-[cytochrome] + nitrite + H2O. Catalytic subunit of the periplasmic nitrate reductase complex NapAB. Receives electrons from NapB and catalyzes the reduction of nitrate to nitrite. The polypeptide is Periplasmic nitrate reductase (Ectopseudomonas mendocina (strain ymp) (Pseudomonas mendocina)).